Reading from the N-terminus, the 958-residue chain is Structure-specific endonuclease subunit SLX4 (958 aa).

Disordered regions lie at residues 89–123 (AESP…KGKT), 183–209 (QKKA…GPID), 326–400 (LATA…LSPT), 531–589 (DLTI…EQHQ), 594–613 (QSNT…SFEL), and 655–849 (STAA…SPPA). Over residues 109-121 (KKPRTAGARKKKG) the composition is skewed to basic residues. Positions 332–341 (RRPEEAERST) are enriched in basic and acidic residues. Over residues 342 to 351 (LSRQQDTHIP) the composition is skewed to polar residues. Positions 364–373 (AASKSASAKP) are enriched in low complexity. Residues 374 to 389 (KAAKKAPKPRATKKKQ) are compositionally biased toward basic residues. Over residues 600-610 (QPQPAPPPPPS) the composition is skewed to pro residues. 3 stretches are compositionally biased toward low complexity: residues 655 to 666 (STAAQAAMSTSA), 775 to 787 (TTSP…RAKA), and 821 to 838 (PDSG…SSPD).

The protein belongs to the SLX4 family. In terms of assembly, forms a heterodimer with SLX1. In terms of processing, phosphorylated in response to DNA damage.

It localises to the nucleus. Functionally, regulatory subunit of the SLX1-SLX4 structure-specific endonuclease that resolves DNA secondary structures generated during DNA repair and recombination. Has endonuclease activity towards branched DNA substrates, introducing single-strand cuts in duplex DNA close to junctions with ss-DNA. In Chaetomium globosum (strain ATCC 6205 / CBS 148.51 / DSM 1962 / NBRC 6347 / NRRL 1970) (Soil fungus), this protein is Structure-specific endonuclease subunit SLX4.